The following is a 112-amino-acid chain: Thioredoxin-like protein YdfQ (112 aa).

In terms of domain architecture, Thioredoxin spans 1 to 107 (MKEMTGLHSL…LEQKLKRVYR (107 aa)). A disulfide bond links Cys32 and Cys35.

This is Thioredoxin-like protein YdfQ (ydfQ) from Bacillus subtilis (strain 168).